The chain runs to 64 residues: Conotoxin mr5.3 (64 aa).

Positions 1 to 19 (MRCVPVFVILLLLIASVPS) are cleaved as a signal peptide. The propeptide occupies 20-48 (VDAQLKTKDDMPLASSHANVKRTLQILRN). 2 positions are modified to 4-carboxyglutamate: E56 and E60.

Contains 2 disulfide bonds that can be either 'C1-C3, C2-C4' or 'C1-C4, C2-C3', since these disulfide connectivities have been observed for conotoxins with cysteine framework V (for examples, see AC P0DQQ7 and AC P81755). As to expression, expressed by the venom duct.

Its subcellular location is the secreted. The sequence is that of Conotoxin mr5.3 from Conus marmoreus (Marble cone).